Reading from the N-terminus, the 379-residue chain is AT-rich binding protein (379 aa).

The C2H2-type 1 zinc-finger motif lies at I29–H52. Residues E114–H124 are compositionally biased toward basic and acidic residues. 2 disordered regions span residues E114–K148 and P221–L267. Low complexity-rich tracts occupy residues Q125–Q143, A223–P242, and Q249–Q262. C2H2-type zinc fingers lie at residues Y312–H336 and F342–H365.

It localises to the nucleus. Its function is as follows. May be a transcription factor for genes having (A+T) stretches in their promoter and/or enhancer regions. Binds to AT rich DNA. The chain is AT-rich binding protein from Drosophila willistoni (Fruit fly).